The primary structure comprises 724 residues: Solute carrier organic anion transporter family member 4C1 (724 aa).

Residues Met1 to Gly105 lie on the Cytoplasmic side of the membrane. Phosphoserine occurs at positions 15, 16, 24, 26, and 28. A disordered region spans residues Ile30–Ser71. The segment covering Ser44–Glu60 has biased composition (low complexity). A helical membrane pass occupies residues Gly106–Val126. Residues Asn127–Gly145 are Extracellular-facing. A helical transmembrane segment spans residues Leu146–Gly166. Residues Glu167 to Pro172 are Cytoplasmic-facing. Residues Arg173 to Gly197 form a helical membrane-spanning segment. The Extracellular segment spans residues Glu198 to Ser223. The helical transmembrane segment at Ser224–Leu254 threads the bilayer. Residues Asp255–Ser274 are Cytoplasmic-facing. The chain crosses the membrane as a helical span at residues Ile275–Val295. Over Ala296–Leu311 the chain is Extracellular. The chain crosses the membrane as a helical span at residues Gly312–Pro336. The Cytoplasmic segment spans residues Lys337–Asn377. A helical membrane pass occupies residues Leu378–Thr399. Topologically, residues Gly400 to Phe419 are extracellular. A helical membrane pass occupies residues Ala420–Val443. Residues Ser444 to Arg447 are Cytoplasmic-facing. A helical transmembrane segment spans residues Met448–Phe471. Residues Met472–Phe580 lie on the Extracellular side of the membrane. The 55-residue stretch at Gly495–Glu549 folds into the Kazal-like domain. Cystine bridges form between Cys501/Cys530, Cys507/Cys526, and Cys516/Cys547. The helical transmembrane segment at Leu581–Leu603 threads the bilayer. Residues Arg604–Ser612 lie on the Cytoplasmic side of the membrane. Residues Leu613–Ile638 form a helical membrane-spanning segment. At Asp639–Ser672 the chain is on the extracellular side. The helical transmembrane segment at Val673 to Tyr690 threads the bilayer. The Cytoplasmic portion of the chain corresponds to Lys691 to Gly724.

Belongs to the organo anion transporter (TC 2.A.60) family. Predominantly expressed in kidney but also weakly expressed in both fetal liver and kidney.

The protein resides in the basolateral cell membrane. The catalysed reaction is estrone 3-sulfate(out) = estrone 3-sulfate(in). It carries out the reaction L-thyroxine(out) = L-thyroxine(in). The enzyme catalyses 3,3',5-triiodo-L-thyronine(out) = 3,3',5-triiodo-L-thyronine(in). It catalyses the reaction chenodeoxycholate(out) = chenodeoxycholate(in). The catalysed reaction is glycocholate(out) = glycocholate(in). It carries out the reaction L-homoarginine(in) = L-homoarginine(out). The enzyme catalyses L-arginine(in) = L-arginine(out). It catalyses the reaction N(omega),N(omega)-dimethyl-L-arginine(out) = N(omega),N(omega)-dimethyl-L-arginine(in). Functionally, mediates the transport of organic anions such as steroids (estrone 3-sulfate, chenodeoxycholate, glycocholate) and thyroid hormones (3,3',5-triiodo-L-thyronine (T3), L-thyroxine (T4)), in the kidney. Capable of transporting cAMP and pharmacological substances such as digoxin, ouabain and methotrexate. Transport is independent of sodium, chloride ion, and ATP. Transport activity is stimulated by an acidic extracellular environment due to increased substrate affinity to the transporter. The driving force for this transport activity is currently not known. The role of hydrogencarbonate (HCO3(-), bicarbonate) as the probable counteranion that exchanges for organic anions is still not well defined. Functions as an uptake transporter at the apical membrane, suggesting a role in renal reabsorption. Involved in the renal secretion of the uremic toxin ADMA (N(omega),N(omega)-dimethyl-L-arginine or asymmetrical dimethylarginine), which is associated to cardiovascular events and mortality, and the structurally related amino acids L-arginine and L-homoarginine (a cardioprotective biomarker). Can act bidirectionally, suggesting a dual protective role of this transport protein; exporting L-homoarginine after being synthesized in proximal tubule cells, and mediating uptake of ADMA from the blood into proximal tubule cells where it is degraded by the enzyme dimethylarginine dimethylaminohydrolase 1 (DDAH1). May be involved in sperm maturation by enabling directed movement of organic anions and compounds within or between cells. This ion-transporting process is important to maintain the strict epididymal homeostasis necessary for sperm maturation. May have a role in secretory functions since seminal vesicle epithelial cells are assumed to secrete proteins involved in decapacitation by modifying surface proteins to facilitate the acquisition of the ability to fertilize the egg. This Homo sapiens (Human) protein is Solute carrier organic anion transporter family member 4C1.